A 237-amino-acid polypeptide reads, in one-letter code: N-alpha-acetyltransferase 40 (237 aa).

A lipid anchor (N-myristoyl glycine) is attached at Gly2. Positions 63–216 (TALSPDTVEW…EDCSYEILSR (154 aa)) constitute an N-acetyltransferase domain. Substrate contacts are provided by residues Tyr85, 127–129 (DVE), and Tyr138. Acetyl-CoA contacts are provided by residues 140 to 142 (VQL) and 148 to 153 (RKGLGK). Thr174 is a substrate binding site. Acetyl-CoA is bound at residue Asn179. A substrate-binding site is contributed by Tyr211.

It belongs to the acetyltransferase family. NAA40 subfamily.

The protein localises to the cytoplasm. It localises to the nucleus. The catalysed reaction is N-terminal L-seryl-[histone H4] + acetyl-CoA = N-terminal N(alpha)-acetyl-L-seryl-[histone H4] + CoA + H(+). It carries out the reaction N-terminal L-seryl-[histone H2A] + acetyl-CoA = N-terminal N(alpha)-acetyl-L-seryl-[histone H2A] + CoA + H(+). N-alpha-acetyltransferase that specifically mediates the acetylation of the N-terminal residues of histones H4 and H2A. In contrast to other N-alpha-acetyltransferase, has a very specific selectivity for histones H4 and H2A N-terminus and specifically recognizes the 'Ser-Gly-Arg-Gly sequence'. The sequence is that of N-alpha-acetyltransferase 40 (naa40) from Danio rerio (Zebrafish).